Reading from the N-terminus, the 338-residue chain is S-adenosylmethionine:tRNA ribosyltransferase-isomerase (338 aa).

It belongs to the QueA family. As to quaternary structure, monomer.

Its subcellular location is the cytoplasm. The enzyme catalyses 7-aminomethyl-7-carbaguanosine(34) in tRNA + S-adenosyl-L-methionine = epoxyqueuosine(34) in tRNA + adenine + L-methionine + 2 H(+). It functions in the pathway tRNA modification; tRNA-queuosine biosynthesis. In terms of biological role, transfers and isomerizes the ribose moiety from AdoMet to the 7-aminomethyl group of 7-deazaguanine (preQ1-tRNA) to give epoxyqueuosine (oQ-tRNA). This chain is S-adenosylmethionine:tRNA ribosyltransferase-isomerase, found in Francisella philomiragia subsp. philomiragia (strain ATCC 25017 / CCUG 19701 / FSC 153 / O#319-036).